A 416-amino-acid polypeptide reads, in one-letter code: Prostacyclin receptor (416 aa).

At 1-45 (MVASGGRPDGPPSITPESPLIVGGREWQGMAGSCWNITYVQDSVG) the chain is on the extracellular side. 2 disulfide bridges follow: C34–C194 and C121–C199. N-linked (GlcNAc...) asparagine glycosylation occurs at N36. Residues 46 to 67 (PATSTLMFVAGVVGNGLALGIL) form a helical membrane-spanning segment. At 68–80 (GARRRSHPSAFAV) the chain is on the cytoplasmic side. The helical transmembrane segment at 81–105 (LVTGLAVTDLLGTCFLSPAVFVAYA) threads the bilayer. Topologically, residues 106-123 (RNSSLLGLAHGGTMLCDT) are extracellular. Residues 124–144 (FAFAMTFFGLASTLILFAMAV) form a helical membrane-spanning segment. Residues 145–163 (ERCLALSHPYLYAQLDGPR) are Cytoplasmic-facing. Residues 164–187 (CARLALPAIYAFCCLFCSLPLLGL) traverse the membrane as a helical segment. At 188–215 (GEHQQYCPGSWCFIRMRSPQPGGCAFSL) the chain is on the extracellular side. The chain crosses the membrane as a helical span at residues 216 to 237 (AYASLMALLVTSIFFCNGSVTL). The Cytoplasmic portion of the chain corresponds to 238-264 (SLCHMYRQQRRHHGSFVPTSRAREDEV). Residues 265–289 (YHLILLALMTGIMAVCSLPLTIRGF) traverse the membrane as a helical segment. Topologically, residues 290–302 (TQAIAPDSREMGD) are extracellular. A helical transmembrane segment spans residues 303 to 323 (LHAFRFNAFNPILDPWVFILF). Residues 324–416 (RKAVFQRLKF…TEAVVACSLC (93 aa)) lie on the Cytoplasmic side of the membrane. S366 is subject to Phosphoserine. The residue at position 413 (C413) is a Cysteine methyl ester. C413 carries the S-farnesyl cysteine lipid modification. Positions 414–416 (SLC) are cleaved as a propeptide — removed in mature form.

It belongs to the G-protein coupled receptor 1 family. Interacts (non-isoprenylated C-terminus) with PDZK1. In terms of processing, isoprenylation does not influence ligand binding but is required for efficient coupling to the effectors adenylyl cyclase and phospholipase C.

It localises to the cell membrane. Receptor for prostacyclin (prostaglandin I2 or PGI2). The activity of this receptor is mediated by G(s) proteins which activate adenylate cyclase. The polypeptide is Prostacyclin receptor (Ptgir) (Rattus norvegicus (Rat)).